A 284-amino-acid polypeptide reads, in one-letter code: Formamidopyrimidine-DNA glycosylase (284 aa).

Pro2 serves as the catalytic Schiff-base intermediate with DNA. Glu3 (proton donor) is an active-site residue. Lys60 (proton donor; for beta-elimination activity) is an active-site residue. His99, Arg118, and Arg163 together coordinate DNA. An FPG-type zinc finger spans residues 248–282 (WVYGRQGQPCRTCGQTIERIKLVGRSTHFCPQCQP). Catalysis depends on Arg272, which acts as the Proton donor; for delta-elimination activity.

The protein belongs to the FPG family. As to quaternary structure, monomer. Requires Zn(2+) as cofactor.

The enzyme catalyses Hydrolysis of DNA containing ring-opened 7-methylguanine residues, releasing 2,6-diamino-4-hydroxy-5-(N-methyl)formamidopyrimidine.. It catalyses the reaction 2'-deoxyribonucleotide-(2'-deoxyribose 5'-phosphate)-2'-deoxyribonucleotide-DNA = a 3'-end 2'-deoxyribonucleotide-(2,3-dehydro-2,3-deoxyribose 5'-phosphate)-DNA + a 5'-end 5'-phospho-2'-deoxyribonucleoside-DNA + H(+). Functionally, involved in base excision repair of DNA damaged by oxidation or by mutagenic agents. Acts as a DNA glycosylase that recognizes and removes damaged bases. Has a preference for oxidized purines, such as 7,8-dihydro-8-oxoguanine (8-oxoG). Has AP (apurinic/apyrimidinic) lyase activity and introduces nicks in the DNA strand. Cleaves the DNA backbone by beta-delta elimination to generate a single-strand break at the site of the removed base with both 3'- and 5'-phosphates. The protein is Formamidopyrimidine-DNA glycosylase of Acaryochloris marina (strain MBIC 11017).